Reading from the N-terminus, the 194-residue chain is Glycerol-3-phosphate acyltransferase (194 aa).

5 helical membrane-spanning segments follow: residues 2 to 22 (LIEI…TGLL), 51 to 71 (SVGI…VLAA), 80 to 100 (WIAL…FLGF), 112 to 132 (VFLG…VAVV), and 155 to 175 (FLSG…LVIW).

This sequence belongs to the PlsY family. Probably interacts with PlsX.

It localises to the cell inner membrane. The catalysed reaction is an acyl phosphate + sn-glycerol 3-phosphate = a 1-acyl-sn-glycero-3-phosphate + phosphate. It participates in lipid metabolism; phospholipid metabolism. Its function is as follows. Catalyzes the transfer of an acyl group from acyl-phosphate (acyl-PO(4)) to glycerol-3-phosphate (G3P) to form lysophosphatidic acid (LPA). This enzyme utilizes acyl-phosphate as fatty acyl donor, but not acyl-CoA or acyl-ACP. The polypeptide is Glycerol-3-phosphate acyltransferase (Geobacter metallireducens (strain ATCC 53774 / DSM 7210 / GS-15)).